Reading from the N-terminus, the 364-residue chain is Coproporphyrin III ferrochelatase (364 aa).

The Fe-coproporphyrin III site is built by arginine 29 and tyrosine 118. Residues histidine 169 and glutamate 250 each contribute to the Fe(2+) site.

The protein belongs to the ferrochelatase family.

It is found in the cytoplasm. It carries out the reaction Fe-coproporphyrin III + 2 H(+) = coproporphyrin III + Fe(2+). It participates in porphyrin-containing compound metabolism; protoheme biosynthesis. In terms of biological role, involved in coproporphyrin-dependent heme b biosynthesis. Catalyzes the insertion of ferrous iron into coproporphyrin III to form Fe-coproporphyrin III. This chain is Coproporphyrin III ferrochelatase, found in Streptococcus pneumoniae serotype 2 (strain D39 / NCTC 7466).